Consider the following 428-residue polypeptide: MSAIVDIIGREVLDSRGNPTVECDVLLESGVMGRAAVPSGASTGSREAIELRDGDKSRYLGKGVLKAVQNINVEIAETILGLDASEQAFLDHTLIELDGTHNKARLGANATLAVSMAVARAAAEEAGLPLYRYFGGSGGMQLPVPMMNIVNGGAHANNSLDIQEFMVMPVGAENFRDALRCGAEIFHELKKILAAQGMPTTVGDEGGFAPNFKSNHECLQIIMKAIEGAGYQAGEDVLLALDCAASEFYKDGKYHLSGEGLQLTSSEFSDYLGNLADQFPIVSIEDGMHESDWDGWADITQKLGKKIQLVGDDLFVTNTRILKEGIDKGIANSILIKINQIGTLTETFAAIEMAKRANYTAVISHRSGETEDSTIADIAVGTNAGQIKTGSLSRSDRIAKYNQLLRIEEDLGDVATYPGKSVFYNLKR.

Gln163 provides a ligand contact to (2R)-2-phosphoglycerate. The Proton donor role is filled by Glu205. Residues Asp242, Glu285, and Asp312 each coordinate Mg(2+). Residues Lys337, Arg366, Ser367, and Lys388 each coordinate (2R)-2-phosphoglycerate. Lys337 functions as the Proton acceptor in the catalytic mechanism.

The protein belongs to the enolase family. It depends on Mg(2+) as a cofactor.

The protein localises to the cytoplasm. The protein resides in the secreted. It localises to the cell surface. The catalysed reaction is (2R)-2-phosphoglycerate = phosphoenolpyruvate + H2O. The protein operates within carbohydrate degradation; glycolysis; pyruvate from D-glyceraldehyde 3-phosphate: step 4/5. Catalyzes the reversible conversion of 2-phosphoglycerate (2-PG) into phosphoenolpyruvate (PEP). It is essential for the degradation of carbohydrates via glycolysis. The polypeptide is Enolase (Polynucleobacter asymbioticus (strain DSM 18221 / CIP 109841 / QLW-P1DMWA-1) (Polynucleobacter necessarius subsp. asymbioticus)).